Here is a 500-residue protein sequence, read N- to C-terminus: Histidine--tRNA ligase (500 aa).

Belongs to the class-II aminoacyl-tRNA synthetase family. As to quaternary structure, homodimer.

The protein resides in the cytoplasm. It carries out the reaction tRNA(His) + L-histidine + ATP = L-histidyl-tRNA(His) + AMP + diphosphate + H(+). This Ruegeria sp. (strain TM1040) (Silicibacter sp.) protein is Histidine--tRNA ligase.